An 86-amino-acid polypeptide reads, in one-letter code: Parvalbumin beta 3 (86 aa).

Alanine 1 carries the N-acetylalanine modification. The EF-hand domain occupies 35–70; it reads LSPEEVKKFFAIIDQDHSGFIEEEELKLFLQTFSAG. Ca(2+) contacts are provided by aspartate 48, aspartate 50, serine 52, phenylalanine 54, glutamate 56, and glutamate 59.

Belongs to the parvalbumin family.

In terms of biological role, in muscle, parvalbumin is thought to be involved in relaxation after contraction. It binds two calcium ions. The polypeptide is Parvalbumin beta 3 (Merluccius hubbsi (Argentine hake)).